We begin with the raw amino-acid sequence, 947 residues long: Bifunctional glutamine synthetase adenylyltransferase/adenylyl-removing enzyme (947 aa).

Residues 1 to 440 form an adenylyl removase region; that stretch reads MTPLSSPLSQ…VFNELIGDDE (440 aa). Positions 450 to 947 are adenylyl transferase; sequence SEPWREVWQD…ASWRKWLVAV (498 aa).

Belongs to the GlnE family. Mg(2+) is required as a cofactor.

The catalysed reaction is [glutamine synthetase]-O(4)-(5'-adenylyl)-L-tyrosine + phosphate = [glutamine synthetase]-L-tyrosine + ADP. The enzyme catalyses [glutamine synthetase]-L-tyrosine + ATP = [glutamine synthetase]-O(4)-(5'-adenylyl)-L-tyrosine + diphosphate. Functionally, involved in the regulation of glutamine synthetase GlnA, a key enzyme in the process to assimilate ammonia. When cellular nitrogen levels are high, the C-terminal adenylyl transferase (AT) inactivates GlnA by covalent transfer of an adenylyl group from ATP to specific tyrosine residue of GlnA, thus reducing its activity. Conversely, when nitrogen levels are low, the N-terminal adenylyl removase (AR) activates GlnA by removing the adenylyl group by phosphorolysis, increasing its activity. The regulatory region of GlnE binds the signal transduction protein PII (GlnB) which indicates the nitrogen status of the cell. The protein is Bifunctional glutamine synthetase adenylyltransferase/adenylyl-removing enzyme of Salmonella enteritidis PT4 (strain P125109).